The primary structure comprises 465 residues: Putative ABC transporter ATP-binding protein MG065 homolog (465 aa).

Residues 232-465 (IELKNVYKYI…PKQVEDINWI (234 aa)) form the ABC transporter domain. An ATP-binding site is contributed by 268 to 275 (GPSGSGKT).

It belongs to the ABC transporter superfamily.

In Mycoplasma pneumoniae (strain ATCC 29342 / M129 / Subtype 1) (Mycoplasmoides pneumoniae), this protein is Putative ABC transporter ATP-binding protein MG065 homolog.